A 414-amino-acid polypeptide reads, in one-letter code: 3-oxo-isoapionate-4-phosphate transcarboxylase/hydrolase (414 aa).

3 residues coordinate Mg(2+): Lys180, Asp182, and Glu183. Lys180 carries the N6-carboxylysine modification.

This sequence belongs to the RuBisCO large chain family. Requires Mg(2+) as cofactor.

The enzyme catalyses 3-oxoisoapionate 4-phosphate + H2O = (2R)-3-phosphoglycerate + glycolate + H(+). It participates in carbohydrate metabolism. Involved in catabolism of D-apiose. Catalyzes the conversion of 3-oxo-isoapionate 4-phosphate to 3-phosphoglycerate and glycolate. The protein is 3-oxo-isoapionate-4-phosphate transcarboxylase/hydrolase of Xanthobacter autotrophicus (strain ATCC BAA-1158 / Py2).